Consider the following 234-residue polypeptide: Large ribosomal subunit protein uL1 (234 aa).

It belongs to the universal ribosomal protein uL1 family. As to quaternary structure, part of the 50S ribosomal subunit.

Functionally, binds directly to 23S rRNA. The L1 stalk is quite mobile in the ribosome, and is involved in E site tRNA release. Protein L1 is also a translational repressor protein, it controls the translation of the L11 operon by binding to its mRNA. This Escherichia coli (strain 55989 / EAEC) protein is Large ribosomal subunit protein uL1.